We begin with the raw amino-acid sequence, 274 residues long: 4-deoxy-L-threo-5-hexosulose-uronate ketol-isomerase (274 aa).

Zn(2+) contacts are provided by His-192, His-194, Glu-199, and His-241.

It belongs to the KduI family. The cofactor is Zn(2+).

It catalyses the reaction 5-dehydro-4-deoxy-D-glucuronate = 3-deoxy-D-glycero-2,5-hexodiulosonate. The protein operates within glycan metabolism; pectin degradation; 2-dehydro-3-deoxy-D-gluconate from pectin: step 4/5. Catalyzes the isomerization of 5-dehydro-4-deoxy-D-glucuronate to 3-deoxy-D-glycero-2,5-hexodiulosonate. This is 4-deoxy-L-threo-5-hexosulose-uronate ketol-isomerase from Shigella boydii serotype 18 (strain CDC 3083-94 / BS512).